The primary structure comprises 184 residues: Adenine phosphoribosyltransferase (184 aa).

Belongs to the purine/pyrimidine phosphoribosyltransferase family. In terms of assembly, homodimer.

The protein localises to the cytoplasm. The catalysed reaction is AMP + diphosphate = 5-phospho-alpha-D-ribose 1-diphosphate + adenine. It participates in purine metabolism; AMP biosynthesis via salvage pathway; AMP from adenine: step 1/1. In terms of biological role, catalyzes a salvage reaction resulting in the formation of AMP, that is energically less costly than de novo synthesis. This Myxococcus xanthus (strain DK1622) protein is Adenine phosphoribosyltransferase.